The following is a 96-amino-acid chain: Small ribosomal subunit protein bS6 (96 aa).

Belongs to the bacterial ribosomal protein bS6 family.

In terms of biological role, binds together with bS18 to 16S ribosomal RNA. This chain is Small ribosomal subunit protein bS6, found in Streptococcus mutans serotype c (strain ATCC 700610 / UA159).